The primary structure comprises 465 residues: Glutamate--tRNA ligase (465 aa).

Residues 10–20 (PSPTGQLHIGG) carry the 'HIGH' region motif. The Zn(2+) site is built by cysteine 99, cysteine 101, cysteine 126, and glutamate 128. Positions 236 to 240 (KLSKR) match the 'KMSKS' region motif. An ATP-binding site is contributed by lysine 239.

It belongs to the class-I aminoacyl-tRNA synthetase family. Glutamate--tRNA ligase type 1 subfamily. As to quaternary structure, monomer. The cofactor is Zn(2+).

The protein resides in the cytoplasm. It catalyses the reaction tRNA(Glu) + L-glutamate + ATP = L-glutamyl-tRNA(Glu) + AMP + diphosphate. Catalyzes the attachment of glutamate to tRNA(Glu) in a two-step reaction: glutamate is first activated by ATP to form Glu-AMP and then transferred to the acceptor end of tRNA(Glu). This is Glutamate--tRNA ligase from Lawsonia intracellularis (strain PHE/MN1-00).